Here is a 672-residue protein sequence, read N- to C-terminus: Methionine--tRNA ligase (672 aa).

Positions Ala12–His22 match the 'HIGH' region motif. The Zn(2+) site is built by Cys144, Cys147, Cys156, and Cys159. A 'KMSKS' region motif is present at residues Lys330–Ser334. Residue Thr333 participates in ATP binding. The tRNA-binding domain occupies Asp573–Cys672.

It belongs to the class-I aminoacyl-tRNA synthetase family. MetG type 1 subfamily. Homodimer. Zn(2+) serves as cofactor.

It localises to the cytoplasm. It carries out the reaction tRNA(Met) + L-methionine + ATP = L-methionyl-tRNA(Met) + AMP + diphosphate. Is required not only for elongation of protein synthesis but also for the initiation of all mRNA translation through initiator tRNA(fMet) aminoacylation. The sequence is that of Methionine--tRNA ligase from Methanococcus aeolicus (strain ATCC BAA-1280 / DSM 17508 / OCM 812 / Nankai-3).